Here is a 188-residue protein sequence, read N- to C-terminus: Protein TIFY 9 (188 aa).

Positions 20–41 (DADDRHAKSGGSSASSSSSIRG) are disordered. Positions 28–38 (SGGSSASSSSS) are enriched in low complexity. Residues 80–114 (AAAAAAPMTLFYNGSVAVFDVSHDKAEAIMRMATE) form the Tify domain. Residues 135–160 (PLTRTKSLQRFLSKRKERLTSLGPYQ) carry the Jas motif. Residues 156–188 (LGPYQVGGPAAVGATTSTTTKSFLAKEEEHTAS) form a disordered region. A compositionally biased stretch (basic and acidic residues) spans 179–188 (LAKEEEHTAS).

The protein belongs to the TIFY/JAZ family. In terms of assembly, interacts with COI1A and COI2 in a coronatine-dependent manner. Coronatine is an analog of jasmonoyl isoleucine (JA-Ile). Ubiquitinated. Targeted for degradation by the SCF(COI1) E3 ubiquitin ligase-proteasome pathway during jasmonate signaling.

Its function is as follows. Repressor of jasmonate responses. The polypeptide is Protein TIFY 9 (Oryza sativa subsp. japonica (Rice)).